The primary structure comprises 241 residues: Terpene cyclase terB (241 aa).

Helical transmembrane passes span 19-39 (LADT…GAMI), 48-68 (YCMG…YTLV), 75-95 (VELA…FAAT), 114-134 (LIFL…AAEI), and 137-157 (ALAY…GGVC). An N-linked (GlcNAc...) asparagine glycan is attached at N163. 2 consecutive transmembrane segments (helical) span residues 169 to 189 (SVTL…FAFL) and 198 to 218 (FAWL…LADI).

This sequence belongs to the paxB family.

The protein resides in the membrane. It functions in the pathway secondary metabolite biosynthesis. Functionally, terpene cyclase; part of the gene cluster that mediates the biosynthesis of terpendoles, indole-diterpene (IDT) mycotoxins including terpendole I, terpendole K, terpendole C, as well as the kinesin Eg5 inhibitor terpendole E. Terpendoles biosynthesis begins with the synthesis of geranylgeranyl diphosphate (GGPP) by a yet unidentified GGPP synthase. Condensation of indole-3-glycerol phosphate with GGPP by the prenyltransferase terC then forms 3-geranylgeranylindole (3-GGI), followed by epoxidation and cyclization of this intermediate (by the FAD-dependent monooxygeanse terM and the terpene cyclase terB) to form paspaline. The cytochrome monooxygenase terQ then hydroxylates paspalline at C-11 to yield terpendole E. The cytochrome monooxygenase terP converts terpendole E to 13-desoxyterpendole I, and terQ converts 13-desoxyterpendole I into terpendole I. TerF and terK are required for conversion of terpendole I to terpendole C which is further converted to terpendole K. This chain is Terpene cyclase terB, found in Tolypocladium album (Soil fungus).